The primary structure comprises 338 residues: Holliday junction branch migration complex subunit RuvB (338 aa).

A large ATPase domain (RuvB-L) region spans residues 4–185 (EDQKILDAKP…FGIVAHMQFY (182 aa)). ATP contacts are provided by residues Leu24, Arg25, Gly66, Lys69, Thr70, Thr71, 132 to 134 (EDF), Arg175, Tyr185, and Arg222. Thr70 lines the Mg(2+) pocket. The interval 186-256 (PVSDLKLIAK…IVDNALNKLH (71 aa)) is small ATPAse domain (RuvB-S). Residues 259 to 338 (ARGLDETDLK…LQIPYQTGLS (80 aa)) form a head domain (RuvB-H) region. The DNA site is built by Arg314 and Arg319.

Belongs to the RuvB family. In terms of assembly, homohexamer. Forms an RuvA(8)-RuvB(12)-Holliday junction (HJ) complex. HJ DNA is sandwiched between 2 RuvA tetramers; dsDNA enters through RuvA and exits via RuvB. An RuvB hexamer assembles on each DNA strand where it exits the tetramer. Each RuvB hexamer is contacted by two RuvA subunits (via domain III) on 2 adjacent RuvB subunits; this complex drives branch migration. In the full resolvosome a probable DNA-RuvA(4)-RuvB(12)-RuvC(2) complex forms which resolves the HJ.

The protein localises to the cytoplasm. The catalysed reaction is ATP + H2O = ADP + phosphate + H(+). In terms of biological role, the RuvA-RuvB-RuvC complex processes Holliday junction (HJ) DNA during genetic recombination and DNA repair, while the RuvA-RuvB complex plays an important role in the rescue of blocked DNA replication forks via replication fork reversal (RFR). RuvA specifically binds to HJ cruciform DNA, conferring on it an open structure. The RuvB hexamer acts as an ATP-dependent pump, pulling dsDNA into and through the RuvAB complex. RuvB forms 2 homohexamers on either side of HJ DNA bound by 1 or 2 RuvA tetramers; 4 subunits per hexamer contact DNA at a time. Coordinated motions by a converter formed by DNA-disengaged RuvB subunits stimulates ATP hydrolysis and nucleotide exchange. Immobilization of the converter enables RuvB to convert the ATP-contained energy into a lever motion, pulling 2 nucleotides of DNA out of the RuvA tetramer per ATP hydrolyzed, thus driving DNA branch migration. The RuvB motors rotate together with the DNA substrate, which together with the progressing nucleotide cycle form the mechanistic basis for DNA recombination by continuous HJ branch migration. Branch migration allows RuvC to scan DNA until it finds its consensus sequence, where it cleaves and resolves cruciform DNA. The polypeptide is Holliday junction branch migration complex subunit RuvB (Oenococcus oeni (strain ATCC BAA-331 / PSU-1)).